The following is a 161-amino-acid chain: Globin CTT-VIIB-4 (161 aa).

A signal peptide spans 1–16; it reads MKFFAVLALCIVGAIA. The Globin domain occupies 18–161; the sequence is PLTADEASLV…NTMAVAVAHL (144 aa). Heme b is bound by residues histidine 76 and histidine 111.

Belongs to the globin family. Homodimer.

The sequence is that of Globin CTT-VIIB-4 (CTT-7B4) from Chironomus thummi thummi (Midge).